A 164-amino-acid chain; its full sequence is Protein-export protein SecB (164 aa).

Belongs to the SecB family. In terms of assembly, homotetramer, a dimer of dimers. One homotetramer interacts with 1 SecA dimer.

The protein localises to the cytoplasm. In terms of biological role, one of the proteins required for the normal export of preproteins out of the cell cytoplasm. It is a molecular chaperone that binds to a subset of precursor proteins, maintaining them in a translocation-competent state. It also specifically binds to its receptor SecA. The polypeptide is Protein-export protein SecB (Herminiimonas arsenicoxydans).